Reading from the N-terminus, the 138-residue chain is uncharacterized protein (138 aa).

Positions 74-96 (RRRSPSLPARRPPTPREDALEDY) are disordered. Basic and acidic residues predominate over residues 87–96 (TPREDALEDY).

This is an uncharacterized protein from Orgyia pseudotsugata (Douglas-fir tussock moth).